Consider the following 574-residue polypeptide: Galectin-3-binding protein (574 aa).

The first 18 residues, 1–18 (MALLWLLSVFLLVPGTQG), serve as a signal peptide directing secretion. An SRCR domain is found at 24-124 (MRLVNGASAS…HEKDAGVVCS (101 aa)). 3 disulfide bridges follow: Cys49/Cys113, Cys62/Cys123, and Cys93/Cys103. N-linked (GlcNAc...) asparagine glycans are attached at residues Asn69, Asn96, Asn102, and Asn125. The 69-residue stretch at 153–221 (CDLFIQVTGQ…FYSRRIEVSM (69 aa)) folds into the BTB domain. The region spanning 260-360 (PLELYEYAQA…MLPQELFELQ (101 aa)) is the BACK domain. Asn362, Asn398, Asn540, and Asn569 each carry an N-linked (GlcNAc...) asparagine glycan.

In terms of assembly, homodimers and homomultimers. The multimers form ring-like structures with a diameter of 30-40 nm. Binds LGALS1 and LGALS3. Binds ITGB1, COL4A1, COL5A1, COL6A1, FN1 and NID. The unglycosylated form interacts with PDE4DIP; this interaction, which is PDE4DIP isoform-specific, may connect a pericentrosomal complex to the gamma-tubulin ring complex (gamma-TuRC) to promote microtubule assembly and acetylation. As to expression, detected in thyroid (at protein level).

It is found in the secreted. The protein resides in the extracellular space. It localises to the extracellular matrix. In terms of biological role, promotes integrin-mediated cell adhesion. May stimulate host defense against viruses and tumor cells. The sequence is that of Galectin-3-binding protein (Lgals3bp) from Rattus norvegicus (Rat).